A 203-amino-acid polypeptide reads, in one-letter code: ATP-dependent Clp protease proteolytic subunit 1 (203 aa).

Ser102 functions as the Nucleophile in the catalytic mechanism. His127 is a catalytic residue.

This sequence belongs to the peptidase S14 family. In terms of assembly, fourteen ClpP subunits assemble into 2 heptameric rings which stack back to back to give a disk-like structure with a central cavity, resembling the structure of eukaryotic proteasomes.

The protein resides in the cytoplasm. The catalysed reaction is Hydrolysis of proteins to small peptides in the presence of ATP and magnesium. alpha-casein is the usual test substrate. In the absence of ATP, only oligopeptides shorter than five residues are hydrolyzed (such as succinyl-Leu-Tyr-|-NHMec, and Leu-Tyr-Leu-|-Tyr-Trp, in which cleavage of the -Tyr-|-Leu- and -Tyr-|-Trp bonds also occurs).. In terms of biological role, cleaves peptides in various proteins in a process that requires ATP hydrolysis. Has a chymotrypsin-like activity. Plays a major role in the degradation of misfolded proteins. The sequence is that of ATP-dependent Clp protease proteolytic subunit 1 from Rhizobium johnstonii (strain DSM 114642 / LMG 32736 / 3841) (Rhizobium leguminosarum bv. viciae).